We begin with the raw amino-acid sequence, 883 residues long: Probable pre-mRNA-splicing factor ATP-dependent RNA helicase DEAH8 (883 aa).

Positions 232-395 (LKLIEENQVL…FDSARIYLIP (164 aa)) constitute a Helicase ATP-binding domain. Residue 245 to 252 (GETGSGKT) coordinates ATP. The DEAH box motif lies at 342–345 (DEAH). Residues 416–589 (TVIRTVVQIH…SVVLTLKSLG (174 aa)) form the Helicase C-terminal domain. The tract at residues 845-883 (EDTRPKKTQRRIEEASTSKVDTNKKTRTSKVDTNKKSKR) is disordered.

The protein belongs to the DEAD box helicase family. DEAH subfamily. PRP2 sub-subfamily. In terms of tissue distribution, predominantly expressed in flowers.

The enzyme catalyses ATP + H2O = ADP + phosphate + H(+). May be involved in pre-mRNA splicing. This is Probable pre-mRNA-splicing factor ATP-dependent RNA helicase DEAH8 from Arabidopsis thaliana (Mouse-ear cress).